The sequence spans 32 residues: Natriuretic peptide Coa_NP2 (32 aa).

A disulfide bridge links C8 with C24.

The protein belongs to the natriuretic peptide family. Snake NP subfamily. As to expression, expressed by the venom gland.

The protein localises to the secreted. Snake venom natriuretic peptide that exhibits hypotensive and vasorelaxant effects. Produces a dose-dependent hypotension in rats, followed by significant increases in concentrations of markers of nitric oxide (NO) formation measured in the plasma and vasorelaxation in a thoracic aortic ring bath. The peptide may exert its hypotensive action, at least in part, through stimulation of NO production. The vasorelaxant effect is endothelium-dependent and does not appear to be mediated by the natriuretic peptide receptor-A, as its action is not modified by isatin (a potent NPR1 antagonist). May act by activating the natriuretic peptide receptor-B (NPR2). The protein is Natriuretic peptide Coa_NP2 of Crotalus lutosus abyssus (Grand Canyon rattlesnake).